A 513-amino-acid polypeptide reads, in one-letter code: Ribonuclease Y (513 aa).

The chain crosses the membrane as a helical span at residues Ile3–Leu23. Residues Leu77–Glu96 are disordered. Over residues Ser82 to Glu96 the composition is skewed to basic and acidic residues. In terms of domain architecture, KH spans Ser203–Leu263. The HD domain maps to Leu329–Ala422.

The protein belongs to the RNase Y family.

Its subcellular location is the cell membrane. Endoribonuclease that initiates mRNA decay. The chain is Ribonuclease Y from Porphyromonas gingivalis (strain ATCC BAA-308 / W83).